Reading from the N-terminus, the 798-residue chain is Penicillin-binding protein 1A (798 aa).

At 1–9 (MIKKIVTTC) the chain is on the cytoplasmic side. The helical; Signal-anchor for type II membrane protein transmembrane segment at 10 to 30 (FGLVLGLCVFGVGLVAIAILV) threads the bilayer. Residues 31-798 (TYPKLPSLDS…SKQPQLDSLF (768 aa)) are Periplasmic-facing. A transglycosylase region spans residues 50–218 (LTIYSADGEV…SAYNPIVNPE (169 aa)). Catalysis depends on E88, which acts as the Proton donor; for transglycosylase activity. The tract at residues 414-700 (VVVQEPLLQA…GTIAVPVWVD (287 aa)) is transpeptidase. The active-site Acyl-ester intermediate; for transpeptidase activity is the S461. The interval 751–798 (SRRIREDKEAGAEDVERGAADEVRQEVQETPVLPSNTGSKQPQLDSLF) is disordered. A compositionally biased stretch (basic and acidic residues) spans 753-777 (RIREDKEAGAEDVERGAADEVRQEV). A compositionally biased stretch (polar residues) spans 783-798 (LPSNTGSKQPQLDSLF).

It in the N-terminal section; belongs to the glycosyltransferase 51 family. In the C-terminal section; belongs to the transpeptidase family.

The protein resides in the cell inner membrane. It carries out the reaction [GlcNAc-(1-&gt;4)-Mur2Ac(oyl-L-Ala-gamma-D-Glu-L-Lys-D-Ala-D-Ala)](n)-di-trans,octa-cis-undecaprenyl diphosphate + beta-D-GlcNAc-(1-&gt;4)-Mur2Ac(oyl-L-Ala-gamma-D-Glu-L-Lys-D-Ala-D-Ala)-di-trans,octa-cis-undecaprenyl diphosphate = [GlcNAc-(1-&gt;4)-Mur2Ac(oyl-L-Ala-gamma-D-Glu-L-Lys-D-Ala-D-Ala)](n+1)-di-trans,octa-cis-undecaprenyl diphosphate + di-trans,octa-cis-undecaprenyl diphosphate + H(+). The enzyme catalyses Preferential cleavage: (Ac)2-L-Lys-D-Ala-|-D-Ala. Also transpeptidation of peptidyl-alanyl moieties that are N-acyl substituents of D-alanine.. Its pathway is cell wall biogenesis; peptidoglycan biosynthesis. Cell wall formation. Synthesis of cross-linked peptidoglycan from the lipid intermediates. The enzyme has a penicillin-insensitive transglycosylase N-terminal domain (formation of linear glycan strands) and a penicillin-sensitive transpeptidase C-terminal domain (cross-linking of the peptide subunits). This is Penicillin-binding protein 1A (mrcA) from Neisseria cinerea.